The chain runs to 401 residues: MIYQPPAGARDVLPLEVAQKRWIEQRLQQTFHRWSYQQIITPTLERLETLMAGGAIQPETVIQFWDAEEGLLGLRPELTASIARAAVTRMAGAIYPQRLYYSANIFRRSPGMELSSQQEFFQTGVELLGGSGLADGEILLLLQDCLHSLGLPEWHVVLGEAGLTRSLLSNFPLELQPHIRQAIARLDRVALTELPSDLRQPALDLLDLRGEPASVLQRLAQLDLKPEQRQIVHHLKTLLELVGDRFPLTLDLSLIQTFDYYTGIVFDVIATGEREQRLLGEGGRYDQLLARYHPGGESLPGIGFALNLEDLHQVLLPTGQLPQQMPTSQWLIVPVHPEAIAAAFSYAEKLRGQPESQELRVEMALEWLSPEATREYARCRQITYIAWIEADGSPQIEAVKG.

This sequence belongs to the class-II aminoacyl-tRNA synthetase family. HisZ subfamily. Heteromultimer composed of HisG and HisZ subunits.

Its subcellular location is the cytoplasm. It functions in the pathway amino-acid biosynthesis; L-histidine biosynthesis; L-histidine from 5-phospho-alpha-D-ribose 1-diphosphate: step 1/9. In terms of biological role, required for the first step of histidine biosynthesis. May allow the feedback regulation of ATP phosphoribosyltransferase activity by histidine. This is ATP phosphoribosyltransferase regulatory subunit from Cyanothece sp. (strain PCC 7425 / ATCC 29141).